A 64-amino-acid polypeptide reads, in one-letter code: Fatty acid synthase (64 aa).

The 64-residue stretch at 1-64 folds into the Carrier domain; the sequence is AEGEGQRDLL…VLSMREVRQL (64 aa). S38 bears the O-(pantetheine 4'-phosphoryl)serine; alternate mark. S38 carries the post-translational modification Phosphoserine; alternate.

In terms of assembly, homodimer which is arranged in a head to tail fashion. Interacts with CEACAM1; this interaction is insulin and phosphorylation-dependent; reduces fatty-acid synthase activity.

Its subcellular location is the cytoplasm. It is found in the melanosome. The catalysed reaction is acetyl-CoA + n malonyl-CoA + 2n NADPH + 2n H(+) = a long-chain fatty acid + (n+1) CoA + n CO2 + 2n NADP(+).. Fatty acid synthetase catalyzes the formation of long-chain fatty acids from acetyl-CoA, malonyl-CoA and NADPH. This multifunctional protein has 7 catalytic activities as an acyl carrier protein. This Oryctolagus cuniculus (Rabbit) protein is Fatty acid synthase (FASN).